Reading from the N-terminus, the 467-residue chain is Retinoic acid receptor RXR-alpha (467 aa).

The segment at Met-1–Ser-61 is disordered. A modulating region spans residues Met-1–Ile-139. Lys-4 is covalently cross-linked (Glycyl lysine isopeptide (Lys-Gly) (interchain with G-Cter in SUMO2)). Phosphoserine occurs at positions 22 and 28. The segment covering Pro-32–Pro-55 has biased composition (low complexity). A phosphoserine; by MAPK8 and MAPK9 mark is found at Ser-61 and Ser-75. Residues Pro-79–Ser-109 form a disordered region. Over residues Ser-83–Ser-109 the composition is skewed to polar residues. At Thr-87 the chain carries Phosphothreonine; by MAPK8 and MAPK9. A Glycyl lysine isopeptide (Lys-Gly) (interchain with G-Cter in SUMO) cross-link involves residue Lys-113. Position 134 is a phosphoserine (Ser-134). The Zn(2+) site is built by Cys-140 and Cys-143. The segment at Cys-140–Cys-160 adopts an NR C4-type zinc-finger fold. The nuclear receptor DNA-binding region spans Cys-140 to Met-205. Lys-150 is modified (N6-acetyllysine). Zn(2+)-binding residues include Cys-157 and Cys-160. A nuclear localization signal region spans residues Lys-165–Lys-170. Cys-176, Cys-182, Cys-192, and Cys-195 together coordinate Zn(2+). An NR C4-type zinc finger spans residues Cys-176–Cys-200. Residues Lys-206–Ser-229 are hinge. Positions Gln-211–Asn-223 are enriched in basic and acidic residues. The segment at Gln-211–Glu-233 is disordered. In terms of domain architecture, NR LBD spans Asn-232 to Pro-463. At Ser-264 the chain carries Phosphoserine. Ser-265 is subject to Phosphoserine; by MAPK8 and MAPK9. 9-cis-retinoate contacts are provided by Arg-321 and Ala-332. The all-trans-retinoate site is built by Arg-321 and Ala-332. The tract at residues Arg-353–Gly-373 is required for nuclear export.

The protein belongs to the nuclear hormone receptor family. NR2 subfamily. In terms of assembly, homodimer. Heterodimer (via C-terminus) with RARA; required for ligand-dependent retinoic acid receptor transcriptional activity; association with RARA is enhanced by pulsatile shear stress. Heterodimer with PPARA (via the leucine-like zipper in the LBD); the interaction is required for PPARA transcriptional activity. Heterodimerizes with PPARG. Heterodimerizes (via NR LBD) with RARB. Heterodimerizes with NR1H4; the heterodimerization enhances the binding affinity for LXXLL motifs from coactivators. Interacts with NCOA3 and NCOA6 coactivators. Interacts with FAM120B. Interacts with coactivator PELP1, SENP6, SFPQ, DNTTIP2 and RNF8. Interacts with PRMT2. Interacts with ASXL1. Interacts with BHLHE40/DEC1, BHLHE41/DEC2, MED1, NCOR1 and NCOR2. Interacts in a ligand-dependent fashion with MED1 and NCOA1. Interacts with VDR. Interacts with EP300; the interaction is decreased by 9-cis retinoic acid. Heterodimer (via C-terminus) with NR4A1 (DNA-binding domain); the interaction is enhanced by 9-cis retinoic acid. NR4A1 competes with EP300 for interaction with RXRA and thereby attenuates EP300 mediated acetylation of RXRA. In the absence of hormonal ligand, interacts with TACC1. Interacts ith IGFBP3. In terms of processing, phosphorylated on serine and threonine residues mainly in the N-terminal modulating domain. Constitutively phosphorylated on Ser-22 in the presence or absence of ligand. Under stress conditions, hyperphosphorylated by activated JNK on Ser-61, Ser-75, Thr-87 and Ser-265. Phosphorylated on Ser-28, in vitro, by PKA. This phosphorylation is required for repression of cAMP-mediated transcriptional activity of RARA. Ubiquitinated by UBR5, leading to its degradation: UBR5 specifically recognizes and binds ligand-bound RXRA when it is not associated with coactivators (NCOAs). In presence of NCOAs, the UBR5-degron is not accessible, preventing its ubiquitination and degradation. Post-translationally, sumoylation negatively regulates transcriptional activity. Desumoylated specifically by SENP6. In terms of processing, acetylated by EP300; acetylation enhances DNA binding and transcriptional activity. In terms of tissue distribution, expressed in the adrenal gland with main expression in the zona fasciculata and medulla (at protein level). Expressed in aortic endothelial cells, with high expression in the descending thoracic aorta and the outer curvature of the aortic arch, where pulsatory shear stress exists, but very low in the inner curvature of the aortic arch, where oscillatory shear stress prevails (at protein level).

It localises to the nucleus. The protein resides in the cytoplasm. Its subcellular location is the mitochondrion. Its function is as follows. Receptor for retinoic acid that acts as a transcription factor. Forms homo- or heterodimers with retinoic acid receptors (RARs) and binds to target response elements in response to their ligands, all-trans or 9-cis retinoic acid, to regulate gene expression in various biological processes. The RAR/RXR heterodimers bind to the retinoic acid response elements (RARE) composed of tandem 5'-AGGTCA-3' sites known as DR1-DR5 to regulate transcription. The high affinity ligand for retinoid X receptors (RXRs) is 9-cis retinoic acid. In the absence of ligand, the RXR-RAR heterodimers associate with a multiprotein complex containing transcription corepressors that induce histone deacetylation, chromatin condensation and transcriptional suppression. On ligand binding, the corepressors dissociate from the receptors and coactivators are recruited leading to transcriptional activation. Serves as a common heterodimeric partner for a number of nuclear receptors, such as RARA, RARB and PPARA. The RXRA/RARB heterodimer can act as a transcriptional repressor or transcriptional activator, depending on the RARE DNA element context. The RXRA/PPARA heterodimer is required for PPARA transcriptional activity on fatty acid oxidation genes such as ACOX1 and the P450 system genes. Together with RARA, positively regulates microRNA-10a expression, thereby inhibiting the GATA6/VCAM1 signaling response to pulsatile shear stress in vascular endothelial cells. Acts as an enhancer of RARA binding to RARE DNA element. May facilitate the nuclear import of heterodimerization partners such as VDR and NR4A1. Promotes myelin debris phagocytosis and remyelination by macrophages. Plays a role in the attenuation of the innate immune system in response to viral infections, possibly by negatively regulating the transcription of antiviral genes such as type I IFN genes. Involved in the regulation of calcium signaling by repressing ITPR2 gene expression, thereby controlling cellular senescence. The polypeptide is Retinoic acid receptor RXR-alpha (Rxra) (Rattus norvegicus (Rat)).